Reading from the N-terminus, the 378-residue chain is uncharacterized protein (378 aa).

Residue Cys16 is the For GATase activity of the active site. Residues 16–378 (CGLFGVIDRS…ELAKQLSEVE (363 aa)) form the Glutamine amidotransferase type-2 domain.

This is an uncharacterized protein from Archaeoglobus fulgidus (strain ATCC 49558 / DSM 4304 / JCM 9628 / NBRC 100126 / VC-16).